Consider the following 185-residue polypeptide: NEDD8-conjugating enzyme UBE2F (185 aa).

Position 1 is an N-acetylmethionine (M1). Positions 1 to 29 are interaction with UBA3; the sequence is MLTLASKLKRDDGLKGSRASATASDSTRR. One can recognise a UBC core domain in the interval 32–185; that stretch reads VRDRLLVKEV…VEDYIKRYAR (154 aa). The active-site Glycyl thioester intermediate is the C116.

The protein belongs to the ubiquitin-conjugating enzyme family. UBE2F subfamily. In terms of assembly, interacts with UBA3 and RBX2. Interacts (N-terminally acetylated form) with (via DCUN1 domain) DCUN1D1, DCUN1D2, DCUN1D3, DCUN1D4 and DCUN1D5. Post-translationally, the acetylation of Met-1 increases affinity for DCUN1D3 by about 2 orders of magnitude and is crucial for NEDD8 transfer to cullins.

It catalyses the reaction [E1 NEDD8-activating enzyme]-S-[NEDD8 protein]-yl-L-cysteine + [E2 NEDD8-conjugating enzyme]-L-cysteine = [E1 NEDD8-activating enzyme]-L-cysteine + [E2 NEDD8-conjugating enzyme]-S-[NEDD8-protein]-yl-L-cysteine.. It participates in protein modification; protein neddylation. Accepts the ubiquitin-like protein NEDD8 from the UBA3-NAE1 E1 complex and catalyzes its covalent attachment to other proteins. Together with the E3 ubiquitin ligase RNF7/RBX2, specifically neddylates cullin-5 (CUL5). Does not neddylate CUL1, CUL2, CUL3, CUL4A or CUL4B. Mediates neddylation of the CUL9-RBX1 complex. The sequence is that of NEDD8-conjugating enzyme UBE2F (UBE2F) from Bos taurus (Bovine).